A 663-amino-acid polypeptide reads, in one-letter code: Innate immunity activator protein (663 aa).

Residues 1 to 68 (MLQMPKLNEI…RLPTQPGPGW (68 aa)) are disordered. A compositionally biased stretch (low complexity) spans 40–50 (RAQGQAGGARA). Positions 118 to 147 (AVHKQQRALEARLEACLEELRRLCLREAEL) form a coiled coil. The Nuclear localization signal (NLS) 1 signature appears at 164–170 (PKVRRRI). Disordered regions lie at residues 242-362 (RRRN…ASSL), 378-425 (VPGQ…PRRR), and 444-493 (PLPH…RHRG). Residues 259–272 (ELSASDDSSLSDGL) show a composition bias toward low complexity. A compositionally biased stretch (pro residues) spans 282–298 (PKPPPESPAPPSRPLPP). The span at 327-340 (TSLDHPYEKPRKSS) shows a compositional bias: basic and acidic residues. Residues 332 to 338 (PYEKPRK) carry the Nuclear localization signal (NLS) 2 motif. Over residues 350–361 (ATTPQDGPSASS) the composition is skewed to polar residues. The Nuclear localization signal (NLS) 3 motif lies at 422 to 428 (PRRRPTH). Low complexity predominate over residues 455 to 475 (EDSGSDVSSISHPTSPGSSSP).

In terms of assembly, interacts with IRAK1, NOD2 and RIPK2; the interaction takes place upon PRR stimulation. Interacts with YWHAQ/14-3-3T; the interaction increases upon PRR stimulation and is required for cellular signaling pathway activation and cytokine secretion. Interacts (via N-terminal domain) with CYTH1 and CYTH2 (via their N-terminal domains). Interacts with FBXW11 and BTRC; associates with SCF E3 ubiquitin-protein ligase complexes. Highly expressed in intestinal myeloid-derived cells and expressed in monocyte-derived macrophages upon induction by PRR activation.

It localises to the nucleus. Its subcellular location is the cytoplasm. Its function is as follows. Expressed in peripheral macrophages and intestinal myeloid-derived cells, is required for optimal PRR (pattern recognition receptor)-induced signaling, cytokine secretion, and bacterial clearance. Upon stimulation of a broad range of PRRs (pattern recognition receptor) such as NOD2 or TLR2, TLR3, TLR4, TLR5, TLR7 and TLR9, associates with YWHAQ/14-3-3T, which in turn leads to the recruitment and activation of MAP kinases and NF-kappa-B signaling complexes that amplifies PRR-induced downstream signals and cytokine secretion. In the intestine, regulates adherens junction stability by regulating the degradation of CYTH1 and CYTH2, probably acting as substrate cofactor for SCF E3 ubiquitin-protein ligase complexes. Stabilizes adherens junctions by limiting CYTH1-dependent ARF6 activation. The chain is Innate immunity activator protein from Homo sapiens (Human).